A 270-amino-acid polypeptide reads, in one-letter code: tRNA pseudouridine synthase A (270 aa).

D60 (nucleophile) is an active-site residue. Y118 serves as a coordination point for substrate.

Belongs to the tRNA pseudouridine synthase TruA family. As to quaternary structure, homodimer.

The catalysed reaction is uridine(38/39/40) in tRNA = pseudouridine(38/39/40) in tRNA. Its function is as follows. Formation of pseudouridine at positions 38, 39 and 40 in the anticodon stem and loop of transfer RNAs. The polypeptide is tRNA pseudouridine synthase A (Salmonella agona (strain SL483)).